The primary structure comprises 1025 residues: Multidrug resistance protein MdtC (1025 aa).

Helical transmembrane passes span 3 to 23 (FFALFIYRPVATILLSVAITL), 333 to 353 (EVEQTLIISVALVILVVFLFL), 360 to 380 (IIPAVSVPVSLIGTFAAMYLC), 387 to 407 (LSLMALTIATGFVVDDAIVVL), 431 to 451 (VGFTVLSMSLSLVAVFLPLLL), 469 to 489 (VAIGISLLVSLTLTPMMCGWM), 528 to 548 (LVGVVLLGTIALNIWLYISIP), 853 to 873 (VILIIAAIATVYIVLGILYES), 875 to 895 (VHPLTILSTLPSAGVGALLAL), 897 to 917 (LFNAPFSLIALIGIMLLIGIV), 953 to 973 (PIMMTTLAALFGALPLVLSGG), and 984 to 1004 (ITIVGGLVMSQLLTLYTTPVV).

Belongs to the resistance-nodulation-cell division (RND) (TC 2.A.6) family. MdtC subfamily. Part of a tripartite efflux system composed of MdtA, MdtB and MdtC. MdtC forms a heteromultimer with MdtB.

The protein localises to the cell inner membrane. The MdtABC tripartite complex confers resistance against novobiocin and deoxycholate. This chain is Multidrug resistance protein MdtC, found in Escherichia coli O9:H4 (strain HS).